We begin with the raw amino-acid sequence, 903 residues long: E3 ubiquitin-protein ligase DDB_G0292642 (903 aa).

Disordered stretches follow at residues 115–137 (FTLP…SSSD), 167–236 (LLKR…VIGS), 284–366 (VNKT…NNLK), 415–487 (TPSL…TTEI), and 549–576 (DDSE…GSEG). Composition is skewed to low complexity over residues 120 to 130 (TTNNNNNNTTN) and 178 to 216 (TTTT…TIDT). Positions 217-232 (SSEDDDESISSSDDDI) are enriched in acidic residues. Low complexity-rich tracts occupy residues 287-301 (TSTT…TTTT) and 311-323 (NRNN…NNNN). Residues 313–352 (NNNNNNNNNNNKRFEIESEEESETDISSEEEENNNNNNNN) are a coiled coil. Over residues 329–345 (ESEEESETDISSEEEEN) the composition is skewed to acidic residues. The segment covering 346–364 (NNNNNNNSNNNNNSNNNNN) has biased composition (low complexity). Residues 415 to 427 (TPSLRLSSAHLPN) show a composition bias toward polar residues. Positions 428–443 (TTTTTTTTTTTTTTTT) are enriched in low complexity. Composition is skewed to acidic residues over residues 451 to 466 (NDDD…DSEI) and 549 to 568 (DDSE…ESDS). Residues 542–569 (AELVFEYDDSEEEEEEEEEEEGEESDSE) are a coiled coil. The tract at residues 612-832 (EPVECKICYM…NEYPECFDRQ (221 aa)) is TRIAD supradomain. Zn(2+) contacts are provided by Cys616, Cys619, Cys634, His636, Cys639, Cys642, Cys661, Cys666, Cys704, Cys709, Cys725, Cys728, Cys733, Cys736, His741, Cys746, Cys782, and Cys785. The RING-type 1 zinc finger occupies 616–666 (CKICYMEYDQSNEVFTLECDHVYCFDCITEHLRILITEGRVLDISCPHPQC). The segment at 683 to 746 (NWLKYQKFSM…GEYSHEGAKC (64 aa)) adopts an IBR-type zinc-finger fold. Residues 782-811 (CPTCKSHIEKHDGCNHMTCINCQHQFCWLC) form an RING-type 2; atypical zinc finger. Cys795 is a catalytic residue. 6 residues coordinate Zn(2+): Cys800, Cys803, Cys808, Cys811, His819, and Cys828. The helical transmembrane segment at 864 to 884 (TAAFTVGAPLLLIGGAVLLCV) threads the bilayer.

It belongs to the RBR family. RNF14 subfamily.

It is found in the membrane. It carries out the reaction [E2 ubiquitin-conjugating enzyme]-S-ubiquitinyl-L-cysteine + [acceptor protein]-L-lysine = [E2 ubiquitin-conjugating enzyme]-L-cysteine + [acceptor protein]-N(6)-ubiquitinyl-L-lysine.. The protein operates within protein modification; protein ubiquitination. Its function is as follows. E3 ubiquitin-protein ligase. This is E3 ubiquitin-protein ligase DDB_G0292642 from Dictyostelium discoideum (Social amoeba).